Reading from the N-terminus, the 361-residue chain is Peptide chain release factor 1 (361 aa).

An N5-methylglutamine modification is found at Gln-236.

It belongs to the prokaryotic/mitochondrial release factor family. Methylated by PrmC. Methylation increases the termination efficiency of RF1.

Its subcellular location is the cytoplasm. Functionally, peptide chain release factor 1 directs the termination of translation in response to the peptide chain termination codons UAG and UAA. This Levilactobacillus brevis (strain ATCC 367 / BCRC 12310 / CIP 105137 / JCM 1170 / LMG 11437 / NCIMB 947 / NCTC 947) (Lactobacillus brevis) protein is Peptide chain release factor 1.